The sequence spans 103 residues: NADH-quinone oxidoreductase subunit K (103 aa).

3 consecutive transmembrane segments (helical) span residues 4-24 (LTSYAFVSMMLFSIGAIGVIA), 28-48 (IFVIYMSIEMMLNGINLFLIT), and 64-84 (MVISIAAAEAAIFLSVIILLF).

The protein belongs to the complex I subunit 4L family. In terms of assembly, NDH-1 is composed of 14 different subunits. Subunits NuoA, H, J, K, L, M, N constitute the membrane sector of the complex.

It localises to the cell inner membrane. It catalyses the reaction a quinone + NADH + 5 H(+)(in) = a quinol + NAD(+) + 4 H(+)(out). In terms of biological role, NDH-1 shuttles electrons from NADH, via FMN and iron-sulfur (Fe-S) centers, to quinones in the respiratory chain. The immediate electron acceptor for the enzyme in this species is believed to be ubiquinone. Couples the redox reaction to proton translocation (for every two electrons transferred, four hydrogen ions are translocated across the cytoplasmic membrane), and thus conserves the redox energy in a proton gradient. The polypeptide is NADH-quinone oxidoreductase subunit K (Aliarcobacter butzleri (strain RM4018) (Arcobacter butzleri)).